We begin with the raw amino-acid sequence, 156 residues long: UPF0756 membrane protein Exig_2210 (156 aa).

The next 5 membrane-spanning stretches (helical) occupy residues 5–25 (LFLI…LIIA), 52–72 (WGVT…DIGF), 83–103 (IGII…HGVG), 109–129 (PLVT…FRGV), and 131–151 (VGPL…DIIV).

It belongs to the UPF0756 family.

The protein resides in the cell membrane. This Exiguobacterium sibiricum (strain DSM 17290 / CCUG 55495 / CIP 109462 / JCM 13490 / 255-15) protein is UPF0756 membrane protein Exig_2210.